A 234-amino-acid chain; its full sequence is 7-cyano-7-deazaguanine synthase (234 aa).

Residue 13 to 23 (FSGGIDSTTCL) coordinates ATP. Cys-197, Cys-207, Cys-210, and Cys-213 together coordinate Zn(2+).

Belongs to the QueC family. Zn(2+) is required as a cofactor.

It carries out the reaction 7-carboxy-7-deazaguanine + NH4(+) + ATP = 7-cyano-7-deazaguanine + ADP + phosphate + H2O + H(+). The protein operates within purine metabolism; 7-cyano-7-deazaguanine biosynthesis. Catalyzes the ATP-dependent conversion of 7-carboxy-7-deazaguanine (CDG) to 7-cyano-7-deazaguanine (preQ(0)). The sequence is that of 7-cyano-7-deazaguanine synthase from Syntrophobacter fumaroxidans (strain DSM 10017 / MPOB).